A 135-amino-acid chain; its full sequence is Protein NrdI (135 aa).

The protein belongs to the NrdI family.

Probably involved in ribonucleotide reductase function. The protein is Protein NrdI of Pectobacterium atrosepticum (strain SCRI 1043 / ATCC BAA-672) (Erwinia carotovora subsp. atroseptica).